A 707-amino-acid chain; its full sequence is tRNA 5-methylaminomethyl-2-thiouridine biosynthesis bifunctional protein MnmC (707 aa).

Residues 1–264 (MTKKLEHEYI…KREMLFGTFE (264 aa)) are tRNA (mnm(5)s(2)U34)-methyltransferase. Positions 312 to 707 (IGGGLAGAHA…LFRDLTRNRI (396 aa)) are FAD-dependent cmnm(5)s(2)U34 oxidoreductase.

The protein in the N-terminal section; belongs to the methyltransferase superfamily. tRNA (mnm(5)s(2)U34)-methyltransferase family. In the C-terminal section; belongs to the DAO family. FAD serves as cofactor.

The protein resides in the cytoplasm. It carries out the reaction 5-aminomethyl-2-thiouridine(34) in tRNA + S-adenosyl-L-methionine = 5-methylaminomethyl-2-thiouridine(34) in tRNA + S-adenosyl-L-homocysteine + H(+). Its function is as follows. Catalyzes the last two steps in the biosynthesis of 5-methylaminomethyl-2-thiouridine (mnm(5)s(2)U) at the wobble position (U34) in tRNA. Catalyzes the FAD-dependent demodification of cmnm(5)s(2)U34 to nm(5)s(2)U34, followed by the transfer of a methyl group from S-adenosyl-L-methionine to nm(5)s(2)U34, to form mnm(5)s(2)U34. In Saccharophagus degradans (strain 2-40 / ATCC 43961 / DSM 17024), this protein is tRNA 5-methylaminomethyl-2-thiouridine biosynthesis bifunctional protein MnmC.